Here is a 367-residue protein sequence, read N- to C-terminus: Germination protease (367 aa).

A propeptide spanning residues 1–15 is cleaved from the precursor; that stretch reads MKEPLDLSKYSVRTD.

This sequence belongs to the peptidase A25 family. As to quaternary structure, homotetramer. Autoproteolytically processed. The inactive tetrameric zymogen termed p46 autoprocesses to a smaller form termed p41, which is active only during spore germination.

It carries out the reaction Endopeptidase action with P4 Glu or Asp, P1 preferably Glu &gt; Asp, P1' hydrophobic and P2' Ala.. In terms of biological role, initiates the rapid degradation of small, acid-soluble proteins during spore germination. This is Germination protease from Bacillus thuringiensis subsp. konkukian (strain 97-27).